Here is a 44-residue protein sequence, read N- to C-terminus: Protein non-structural 7b (44 aa).

Residues 9–29 traverse the membrane as a helical segment; it reads FYLCFLAFLLFLVLIMLIIFW.

The protein resides in the host membrane. The protein is Protein non-structural 7b of Homo sapiens (Human).